A 404-amino-acid polypeptide reads, in one-letter code: Argininosuccinate synthase (404 aa).

Residues 10 to 18 and A38 contribute to the ATP site; that span reads AYSGGVDTS. Position 89 (Y89) interacts with L-citrulline. Position 119 (G119) interacts with ATP. L-aspartate-binding residues include T121, N125, and D126. N125 lines the L-citrulline pocket. L-citrulline contacts are provided by R129, S177, S186, E262, and Y274.

This sequence belongs to the argininosuccinate synthase family. Type 1 subfamily. As to quaternary structure, homotetramer.

The protein resides in the cytoplasm. It carries out the reaction L-citrulline + L-aspartate + ATP = 2-(N(omega)-L-arginino)succinate + AMP + diphosphate + H(+). It participates in amino-acid biosynthesis; L-arginine biosynthesis; L-arginine from L-ornithine and carbamoyl phosphate: step 2/3. The chain is Argininosuccinate synthase from Prochlorococcus marinus (strain MIT 9215).